A 577-amino-acid polypeptide reads, in one-letter code: NKAP family protein UM04995 (577 aa).

Residues 1–479 (MPTLAERLGS…YGGALLPGEG (479 aa)) are disordered. Positions 20-31 (KSSHDREQELRS) are enriched in basic and acidic residues. Residues 36–49 (SKQTSRNTAHQDLA) show a composition bias toward polar residues. Positions 50 to 60 (SSERRSIDREL) are enriched in basic and acidic residues. The segment covering 70-89 (SPLSSPQNGSSPRRQRGSPS) has biased composition (low complexity). 3 stretches are compositionally biased toward basic and acidic residues: residues 127–163 (PRED…DSRR), 170–193 (SGDR…REAP), and 265–297 (DSSS…DKHH). 2 stretches are compositionally biased toward basic residues: residues 298–316 (SSSR…RRSS) and 325–336 (SRHRHTRSSRSH). Acidic residues predominate over residues 340 to 350 (DDDDDDDEDVD). Basic and acidic residues predominate over residues 363 to 385 (KVSDGSDSGRSESETDSDSDARS). The segment covering 386 to 395 (SRHRRRHHKS) has biased composition (basic residues). Basic and acidic residues-rich tracts occupy residues 396–408 (DRSS…ESEK) and 417–439 (SESE…RRDS). Positions 529-570 (RKENQVISAEEKRTMLRLQAEEKAKKEREIVSQFKELVDTLQ) form a coiled coil.

It belongs to the NKAP family.

This is NKAP family protein UM04995 from Mycosarcoma maydis (Corn smut fungus).